Here is a 166-residue protein sequence, read N- to C-terminus: MAIKLEDKKAIVAEVNEAAKVALSAVVADARGVTVSAMTGLRKEAREAGVYVRVVRNTLLKRAVEGTEYSILNDAFKGPTLIAFSNEHPGAAARLFKEFAKGQDKFEIKAAAFDGNFIAANQIDVLATLPTRDEAIARLMSVIQGATSKLARTLAAVRDQKEAAAA.

Belongs to the universal ribosomal protein uL10 family. As to quaternary structure, part of the ribosomal stalk of the 50S ribosomal subunit. The N-terminus interacts with L11 and the large rRNA to form the base of the stalk. The C-terminus forms an elongated spine to which L12 dimers bind in a sequential fashion forming a multimeric L10(L12)X complex.

Functionally, forms part of the ribosomal stalk, playing a central role in the interaction of the ribosome with GTP-bound translation factors. The polypeptide is Large ribosomal subunit protein uL10 (Pseudomonas putida (strain W619)).